A 176-amino-acid polypeptide reads, in one-letter code: Inner membrane-spanning protein YciB (176 aa).

Helical transmembrane passes span 22–42 (IYYASGALIVASALVLVYTWL), 50–70 (VALITFVLVAIFGSLTLYYHN), 81–101 (IYSLFAAALLISQFVFGKPLI), 121–141 (IAWALFFLACGAANIYIAFWL), and 149–169 (FKVFGLTGLTLVFTLLSGIYI).

It belongs to the YciB family.

The protein localises to the cell inner membrane. Its function is as follows. Plays a role in cell envelope biogenesis, maintenance of cell envelope integrity and membrane homeostasis. The sequence is that of Inner membrane-spanning protein YciB from Sodalis glossinidius (strain morsitans).